A 285-amino-acid chain; its full sequence is K88 fimbrial protein AD (285 aa).

An N-terminal signal peptide occupies residues 1–21 (MKKTLIALAIAASAASGMAHA).

The protein belongs to the fimbrial K88 protein family. K88 fimbria, 0.1-1 micrometer in length and 7 nanometers in diameter, is composed of about 100 identical subunits.

The protein localises to the fimbrium. Its function is as follows. K88 major fimbrial subunit. Fimbriae (also called pili), are polar filaments radiating from the surface of the bacterium to a length of 0.5-1.5 micrometers and numbering 100-300 per cell. They enable bacteria to colonize the epithelium of specific host organs. The chain is K88 fimbrial protein AD (faeG) from Escherichia coli.